The chain runs to 145 residues: Ribonuclease H (145 aa).

In terms of domain architecture, RNase H type-1 spans 1–142 (MDTPVYLYTD…ADDLANRGAA (142 aa)). The Mg(2+) site is built by D10, E48, D70, and D134.

This sequence belongs to the RNase H family. Monomer. The cofactor is Mg(2+).

The protein localises to the cytoplasm. The enzyme catalyses Endonucleolytic cleavage to 5'-phosphomonoester.. In terms of biological role, endonuclease that specifically degrades the RNA of RNA-DNA hybrids. The sequence is that of Ribonuclease H from Neisseria gonorrhoeae (strain ATCC 700825 / FA 1090).